Reading from the N-terminus, the 329-residue chain is tRNA N6-adenosine threonylcarbamoyltransferase (329 aa).

Positions 107 and 111 each coordinate Fe cation. Residues 129-133 (LVSGG), aspartate 162, glycine 175, and asparagine 268 contribute to the substrate site. Residue aspartate 296 participates in Fe cation binding.

The protein belongs to the KAE1 / TsaD family. It depends on Fe(2+) as a cofactor.

Its subcellular location is the cytoplasm. It carries out the reaction L-threonylcarbamoyladenylate + adenosine(37) in tRNA = N(6)-L-threonylcarbamoyladenosine(37) in tRNA + AMP + H(+). Functionally, required for the formation of a threonylcarbamoyl group on adenosine at position 37 (t(6)A37) in tRNAs that read codons beginning with adenine. Is involved in the transfer of the threonylcarbamoyl moiety of threonylcarbamoyl-AMP (TC-AMP) to the N6 group of A37, together with TsaE and TsaB. TsaD likely plays a direct catalytic role in this reaction. In Nitratiruptor sp. (strain SB155-2), this protein is tRNA N6-adenosine threonylcarbamoyltransferase.